The sequence spans 261 residues: Kallikrein 1-related peptidase b1 (261 aa).

The signal sequence occupies residues 1 to 18 (MWFLILFLALSLGGIDAA). The propeptide at 19–24 (PPVQSR) is activation peptide. The Peptidase S1 domain maps to 25–258 (IVGGFKCEKN…FTSWIKDTLA (234 aa)). Disulfide bonds link Cys31–Cys173, Cys50–Cys66, Cys152–Cys219, Cys184–Cys198, and Cys209–Cys234. His65 (charge relay system) is an active-site residue. Asn102 is a glycosylation site (N-linked (GlcNAc...) asparagine). The active-site Charge relay system is Asp120. Ser213 functions as the Charge relay system in the catalytic mechanism.

This sequence belongs to the peptidase S1 family. Kallikrein subfamily.

It carries out the reaction Preferential cleavage of Arg-|-Xaa bonds in small molecule substrates. Highly selective action to release kallidin (lysyl-bradykinin) from kininogen involves hydrolysis of Met-|-Xaa or Leu-|-Xaa.. Its function is as follows. Glandular kallikreins cleave Met-Lys and Arg-Ser bonds in kininogen to release Lys-bradykinin. This Mus musculus (Mouse) protein is Kallikrein 1-related peptidase b1 (Klk1b1).